A 105-amino-acid chain; its full sequence is UPF0145 protein lpl0253 (105 aa).

It belongs to the UPF0145 family.

The polypeptide is UPF0145 protein lpl0253 (Legionella pneumophila (strain Lens)).